Reading from the N-terminus, the 357-residue chain is Transactivator protein DR7 (357 aa).

The interval 107–187 (LVGKDGAVYV…LLTVGGLCQT (81 aa)) is interaction with host p53.

Belongs to the herpesviridae US22 family. In terms of assembly, interacts with host p53 and inhibits p53-activated transcription.

Involved in transactivation. Displays transforming activity. The sequence is that of Transactivator protein DR7 (DR7L) from Homo sapiens (Human).